Consider the following 84-residue polypeptide: Perlustrin (84 aa).

The 82-residue stretch at 1 to 82 (LSCASCENAA…LDFKGVCARV (82 aa)) folds into the IGFBP N-terminal domain. Disulfide bonds link Cys-3–Cys-28, Cys-6–Cys-30, Cys-11–Cys-31, Cys-18–Cys-34, Cys-42–Cys-55, and Cys-49–Cys-79.

As to expression, shell.

In terms of biological role, binds human IGF1 and IGF2 and bovine insulin. This chain is Perlustrin, found in Haliotis laevigata (Smooth Australian abalone).